A 1846-amino-acid chain; its full sequence is Unconventional myosin-Vb (1846 aa).

In terms of domain architecture, Myosin N-terminal SH3-like spans 8–60 (SRYTRVWIPDPDEVWRSAELTKDYKDGDESLQLRLEDDTILDYPIDVQNNQVP). The tract at residues 21–40 (VWRSAELTKDYKDGDESLQL) is requires for interaction with LIMA1. Residues 69–763 (VGENDLTALS…QVAYLEKLRA (695 aa)) form the Myosin motor domain. Residue 163 to 170 (GESGAGKT) participates in ATP binding. The interval 599-629 (VPATNTAKSRSSSKINVRSSRPLMKAPNKEH) is disordered. Residues 607-619 (SRSSSKINVRSSR) are compositionally biased toward low complexity. The segment at 641 to 663 (LNLLMETLNATTPHYVRCIKPND) is actin-binding. 6 IQ domains span residues 767 to 788 (REAT…KYRR), 789 to 813 (LRAA…EHLR), 814 to 837 (RTRA…YCRV), 838 to 861 (RRAA…PPVL), 862 to 884 (TEHK…HFQR), and 885 to 914 (QRDA…EARS). Coiled-coil stretches lie at residues 915-1272 (AEHL…ADQR) and 1334-1450 (LKQV…RHHE). A disordered region spans residues 1088-1122 (RDEQQTPGHRKNPSNQSSLESDSNYPSISTSEIGD). Residues 1100-1120 (PSNQSSLESDSNYPSISTSEI) are compositionally biased toward polar residues. S1444 carries the post-translational modification Phosphoserine. The 278-residue stretch at 1524-1801 (SSTINGIKKV…IRTIQAQLQE (278 aa)) folds into the Dilute domain.

The protein belongs to the TRAFAC class myosin-kinesin ATPase superfamily. Myosin family. Component of the CART complex, at least composed of ACTN4, HGS/HRS, MYO5B and TRIM3. Interacts with RAB11FIP2. Interacts with RAB11A and RAB8A. Found in a complex with CFTR and RAB11A. Interacts with NPC1L1. Interacts with LIMA1.

It localises to the cytoplasm. In terms of biological role, may be involved in vesicular trafficking via its association with the CART complex. The CART complex is necessary for efficient transferrin receptor recycling but not for EGFR degradation. Required in a complex with RAB11A and RAB11FIP2 for the transport of NPC1L1 to the plasma membrane. Together with RAB11A participates in CFTR trafficking to the plasma membrane and TF (transferrin) recycling in nonpolarized cells. Together with RAB11A and RAB8A participates in epithelial cell polarization. Together with RAB25 regulates transcytosis. Required for proper localization of bile salt export pump ABCB11 at the apical/canalicular plasma membrane of hepatocytes. This is Unconventional myosin-Vb (Myo5b) from Rattus norvegicus (Rat).